Consider the following 129-residue polypeptide: Small ribosomal subunit protein uS11 (129 aa).

The protein belongs to the universal ribosomal protein uS11 family. Part of the 30S ribosomal subunit. Interacts with proteins S7 and S18. Binds to IF-3.

Functionally, located on the platform of the 30S subunit, it bridges several disparate RNA helices of the 16S rRNA. Forms part of the Shine-Dalgarno cleft in the 70S ribosome. The protein is Small ribosomal subunit protein uS11 of Levilactobacillus brevis (strain ATCC 367 / BCRC 12310 / CIP 105137 / JCM 1170 / LMG 11437 / NCIMB 947 / NCTC 947) (Lactobacillus brevis).